The following is a 667-amino-acid chain: Protein OS-9 (667 aa).

A signal peptide spans methionine 1–threonine 25. Residues alanine 108–histidine 230 form the MRH domain. A disulfide bridge connects residues cysteine 110 and cysteine 123. A mannooligosaccharide derivative-binding residues include tryptophan 117, tryptophan 118, and glutamine 130. Asparagine 177 carries N-linked (GlcNAc...) asparagine glycosylation. 2 disulfides stabilise this stretch: cysteine 181–cysteine 216 and cysteine 196–cysteine 228. A mannooligosaccharide derivative contacts are provided by aspartate 182, arginine 188, glutamate 212, and tyrosine 218. Disordered stretches follow at residues glutamine 262 to glutamate 450, glutamate 506 to valine 541, and glutamate 636 to phenylalanine 667. Composition is skewed to basic and acidic residues over residues alanine 263–proline 279, glutamate 304–threonine 328, and proline 396–proline 408. Over residues glutamine 410–glutamate 429 the composition is skewed to acidic residues. Positions arginine 430 to glutamate 450 are enriched in basic and acidic residues. The span at lysine 514–proline 523 shows a compositional bias: basic residues. Basic and acidic residues predominate over residues glutamate 636–tyrosine 647.

Belongs to the OS-9 family. As to quaternary structure, component of the HRD1 complex, which comprises at least SYNV1/HRD1, DERL1/2, FAM8A1, HERPUD1/HERP, OS9, SEL1L and UBE2J1. FAM8A1 is stabilized by interaction with SYNV1, which prevents its proteasomal degradation. OS9 and UBE2J1 recruitment to the complex may be mediated by SEL1L. Through this complex, may interact with ERLEC1 and HSPA5. Interacts (via C-terminus) with CPNE6 (via second C2 domain); this interaction occurs in a calcium-dependent manner in vitro. Interacts with CREB3. Post-translationally, intramolecular disulfide bonds.

It is found in the endoplasmic reticulum lumen. Lectin component of the HRD1 complex, which functions in endoplasmic reticulum (ER) quality control and ER-associated degradation (ERAD). Specifically recognizes and binds improperly folded glycoproteins as well as hyperglycosylated proteins, retain them in the ER, and transfers them to the ubiquitination machinery and promote their degradation. Possible targets include TRPV4 as well as hyperglycosylated HSP90B1. This Bos taurus (Bovine) protein is Protein OS-9 (OS9).